Consider the following 127-residue polypeptide: uncharacterized protein (127 aa).

Disordered stretches follow at residues 1–22 (MLPAGCWNDTSRDGPGFRKMKG) and 53–106 (LVGK…PGPK). The segment covering 76–95 (PNGEAHAEQARRKISVEEKQ) has biased composition (basic and acidic residues).

The protein localises to the mitochondrion. This is an uncharacterized protein from Arabidopsis thaliana (Mouse-ear cress).